The primary structure comprises 260 residues: Thiazole synthase (260 aa).

Lys-96 acts as the Schiff-base intermediate with DXP in catalysis. 1-deoxy-D-xylulose 5-phosphate contacts are provided by residues Gly-157, 184–185 (AG), and 206–207 (NT).

Belongs to the ThiG family. Homotetramer. Forms heterodimers with either ThiH or ThiS.

It localises to the cytoplasm. It catalyses the reaction [ThiS sulfur-carrier protein]-C-terminal-Gly-aminoethanethioate + 2-iminoacetate + 1-deoxy-D-xylulose 5-phosphate = [ThiS sulfur-carrier protein]-C-terminal Gly-Gly + 2-[(2R,5Z)-2-carboxy-4-methylthiazol-5(2H)-ylidene]ethyl phosphate + 2 H2O + H(+). Its pathway is cofactor biosynthesis; thiamine diphosphate biosynthesis. Functionally, catalyzes the rearrangement of 1-deoxy-D-xylulose 5-phosphate (DXP) to produce the thiazole phosphate moiety of thiamine. Sulfur is provided by the thiocarboxylate moiety of the carrier protein ThiS. In vitro, sulfur can be provided by H(2)S. The chain is Thiazole synthase from Rhodopseudomonas palustris (strain HaA2).